The primary structure comprises 1436 residues: MAP kinase kinase kinase win1 (1436 aa).

Positions leucine 56–lysine 85 are disordered. Basic and acidic residues predominate over residues serine 76 to lysine 85. A Phosphoserine modification is found at serine 224. At threonine 226 the chain carries Phosphothreonine. Positions glutamate 282–glycine 1123 are interaction with tea4. The Protein kinase domain occupies tryptophan 1120 to valine 1406. ATP is bound by residues isoleucine 1126–valine 1134 and lysine 1149. Aspartate 1244 functions as the Proton acceptor in the catalytic mechanism.

It belongs to the protein kinase superfamily. STE Ser/Thr protein kinase family. MAP kinase kinase kinase subfamily. Interacts with tea4.

It catalyses the reaction L-seryl-[protein] + ATP = O-phospho-L-seryl-[protein] + ADP + H(+). The enzyme catalyses L-threonyl-[protein] + ATP = O-phospho-L-threonyl-[protein] + ADP + H(+). In terms of biological role, involved in a signal transduction pathway that is activated by changes in the osmolarity of the extracellular environment. Activates the wis1 MAP kinase kinase by phosphorylation. The chain is MAP kinase kinase kinase win1 (win1) from Schizosaccharomyces pombe (strain 972 / ATCC 24843) (Fission yeast).